We begin with the raw amino-acid sequence, 427 residues long: Adenylosuccinate synthetase (427 aa).

GTP is bound by residues 12-18 (GDEGKGK) and 40-42 (GHT). Aspartate 13 functions as the Proton acceptor in the catalytic mechanism. Residues aspartate 13 and glycine 40 each coordinate Mg(2+). IMP-binding positions include 13–16 (DEGK), 38–41 (NAGH), threonine 127, arginine 141, glutamine 222, threonine 237, and arginine 301. The active-site Proton donor is histidine 41. 297 to 303 (VVTKRPR) contributes to the substrate binding site. Residues arginine 303, 329-331 (SLD), and 411-413 (AVG) contribute to the GTP site.

This sequence belongs to the adenylosuccinate synthetase family. Homodimer. Mg(2+) is required as a cofactor.

The protein localises to the cytoplasm. It carries out the reaction IMP + L-aspartate + GTP = N(6)-(1,2-dicarboxyethyl)-AMP + GDP + phosphate + 2 H(+). It participates in purine metabolism; AMP biosynthesis via de novo pathway; AMP from IMP: step 1/2. In terms of biological role, plays an important role in the de novo pathway of purine nucleotide biosynthesis. Catalyzes the first committed step in the biosynthesis of AMP from IMP. The protein is Adenylosuccinate synthetase of Leuconostoc citreum (strain KM20).